The following is a 595-amino-acid chain: Putative laccase-18 (595 aa).

An N-terminal signal peptide occupies residues 1–29 (MEKLSTAASLFGVVVAATALAMAVVGGEA). 2 consecutive Plastocyanin-like domains span residues 37–153 (MVHE…PRDG) and 162–316 (KDVP…YTGA). N-linked (GlcNAc...) asparagine glycans are attached at residues N42 and N48. 2 residues coordinate Cu cation: H87 and H89. N-linked (GlcNAc...) asparagine glycosylation occurs at N121. Cu cation-binding residues include H132 and H134. 7 N-linked (GlcNAc...) asparagine glycosylation sites follow: N206, N345, N382, N402, N409, N439, and N470. The region spanning 429-571 (DFPVRPPRPF…ATAFIVEDGP (143 aa)) is the Plastocyanin-like 3 domain. Residues N488, H491, H493, H550, C551, H552, H556, and M561 each contribute to the Cu cation site. Positions 570 to 595 (GPTPETSLPPPPPEFKRCGTNGLSQP) are disordered.

It belongs to the multicopper oxidase family. Cu cation is required as a cofactor.

The protein localises to the secreted. It is found in the extracellular space. It localises to the apoplast. The catalysed reaction is 4 hydroquinone + O2 = 4 benzosemiquinone + 2 H2O. In terms of biological role, lignin degradation and detoxification of lignin-derived products. This chain is Putative laccase-18 (LAC18), found in Oryza sativa subsp. indica (Rice).